A 101-amino-acid polypeptide reads, in one-letter code: Acylphosphatase (101 aa).

The Acylphosphatase-like domain maps to 12-98; that stretch reads RVHVFVTGRV…EGLRGFEVKR (87 aa). Active-site residues include arginine 27 and asparagine 45.

It belongs to the acylphosphatase family.

The catalysed reaction is an acyl phosphate + H2O = a carboxylate + phosphate + H(+). In Trichormus variabilis (strain ATCC 29413 / PCC 7937) (Anabaena variabilis), this protein is Acylphosphatase (acyP).